A 342-amino-acid chain; its full sequence is UDP-3-O-acylglucosamine N-acyltransferase (342 aa).

His234 serves as the catalytic Proton acceptor.

Belongs to the transferase hexapeptide repeat family. LpxD subfamily. In terms of assembly, homotrimer.

The enzyme catalyses a UDP-3-O-[(3R)-3-hydroxyacyl]-alpha-D-glucosamine + a (3R)-hydroxyacyl-[ACP] = a UDP-2-N,3-O-bis[(3R)-3-hydroxyacyl]-alpha-D-glucosamine + holo-[ACP] + H(+). Its pathway is bacterial outer membrane biogenesis; LPS lipid A biosynthesis. In terms of biological role, catalyzes the N-acylation of UDP-3-O-acylglucosamine using 3-hydroxyacyl-ACP as the acyl donor. Is involved in the biosynthesis of lipid A, a phosphorylated glycolipid that anchors the lipopolysaccharide to the outer membrane of the cell. The polypeptide is UDP-3-O-acylglucosamine N-acyltransferase (Oleidesulfovibrio alaskensis (strain ATCC BAA-1058 / DSM 17464 / G20) (Desulfovibrio alaskensis)).